Reading from the N-terminus, the 358-residue chain is Cyclin-dependent kinase 10 (358 aa).

The Protein kinase domain occupies 37 to 321 (FEKLNRIGEG…AGDCLESSYF (285 aa)). Residues 43–51 (IGEGTYGIV) and Lys-66 contribute to the ATP site. Residue Asp-161 is the Proton acceptor of the active site. Thr-194 carries the phosphothreonine modification. A disordered region spans residues 332 to 358 (LMPTFPHHRNKRAAPAATEGQSKRCRP).

This sequence belongs to the protein kinase superfamily. CMGC Ser/Thr protein kinase family. CDC2/CDKX subfamily. In terms of assembly, heterodimer with CCNQ, the interaction is required for kinase activity. Interacts with ETS2. Interacts with PRK2.

The protein resides in the cytoplasm. The protein localises to the cytoskeleton. It is found in the cilium basal body. The enzyme catalyses L-seryl-[protein] + ATP = O-phospho-L-seryl-[protein] + ADP + H(+). It carries out the reaction L-threonyl-[protein] + ATP = O-phospho-L-threonyl-[protein] + ADP + H(+). Its function is as follows. Cyclin-dependent kinase that phosphorylates the transcription factor ETS2 (in vitro) and positively controls its proteasomal degradation (in cells). Involved in the regulation of actin cytoskeleton organization through the phosphorylation of actin dynamics regulators such as PKN2. Is a negative regulator of ciliogenesis through phosphorylation of PKN2 and promotion of RhoA signaling. This Rattus norvegicus (Rat) protein is Cyclin-dependent kinase 10 (Cdk10).